The chain runs to 89 residues: Small ribosomal subunit protein bS20 (89 aa).

The protein belongs to the bacterial ribosomal protein bS20 family.

Functionally, binds directly to 16S ribosomal RNA. This is Small ribosomal subunit protein bS20 from Wolbachia sp. subsp. Brugia malayi (strain TRS).